The chain runs to 136 residues: Large ribosomal subunit protein uL16 (136 aa).

Belongs to the universal ribosomal protein uL16 family. In terms of assembly, part of the 50S ribosomal subunit.

Its function is as follows. Binds 23S rRNA and is also seen to make contacts with the A and possibly P site tRNAs. This is Large ribosomal subunit protein uL16 from Rickettsia akari (strain Hartford).